The chain runs to 449 residues: MRECISVHVGQAGVQIGNACWELFCLEHGIQADGTFGAQASKIHDDDSFTTFFSETGNGKHVPRAVMVDLEPTVVDEVRAGTYRHLFHPEQLITGKEDAANNYARGHYTVGKESIDLVLDRIRKLTDACSGLQGFLIFHSFGGGTGSGFTSLLMERLSLDYGKKSKLEFAIYPAPQVSTAVVEPYNSILTTHTTLEHSDCAFMVDNEAIYDICRRNLDIERPTYTNLNRLISQIVSSITASLRFDGALNVDLTEFQTNLVPYPRIHFPLVTYAPIISAEKAYHEQLSVAEITSSCFEPNSQMVKCDPRHGKYMACCMLYRGDVVPKDVNVAIAAIKTKRTIQFVDWCPTGFKVGINYQPPTVVPGGDLAKVQRAVCMLSNTTAIAEAWARLDHKFDLMYAKRAFVHWYVGEGMEEGEFSEAREDLAALEKDYEEVGTDSFEEENEGEEF.

Residues 1–4 (MREC) carry the MREC motif motif. Positions 11, 71, 140, 144, 145, 179, 206, and 228 each coordinate GTP. Glutamate 71 serves as a coordination point for Mg(2+). Glutamate 254 is a catalytic residue.

It belongs to the tubulin family. Dimer of alpha and beta chains. A typical microtubule is a hollow water-filled tube with an outer diameter of 25 nm and an inner diameter of 15 nM. Alpha-beta heterodimers associate head-to-tail to form protofilaments running lengthwise along the microtubule wall with the beta-tubulin subunit facing the microtubule plus end conferring a structural polarity. Microtubules usually have 13 protofilaments but different protofilament numbers can be found in some organisms and specialized cells. Mg(2+) is required as a cofactor. In terms of processing, some glutamate residues at the C-terminus are polyglycylated, resulting in polyglycine chains on the gamma-carboxyl group. Glycylation is mainly limited to tubulin incorporated into axonemes (cilia and flagella) whereas glutamylation is prevalent in neuronal cells, centrioles, axonemes, and the mitotic spindle. Both modifications can coexist on the same protein on adjacent residues, and lowering polyglycylation levels increases polyglutamylation, and reciprocally. Cilia and flagella glycylation is required for their stability and maintenance. Flagella glycylation controls sperm motility. Post-translationally, some glutamate residues at the C-terminus are polyglutamylated, resulting in polyglutamate chains on the gamma-carboxyl group. Polyglutamylation plays a key role in microtubule severing by spastin (SPAST). SPAST preferentially recognizes and acts on microtubules decorated with short polyglutamate tails: severing activity by SPAST increases as the number of glutamates per tubulin rises from one to eight, but decreases beyond this glutamylation threshold. Glutamylation is also involved in cilia motility. The C-terminal phenylalanine residue is cleaved by MATCAP1/KIAA0895L.

The protein resides in the cytoplasm. It is found in the cytoskeleton. The enzyme catalyses GTP + H2O = GDP + phosphate + H(+). Functionally, tubulin is the major constituent of microtubules, a cylinder consisting of laterally associated linear protofilaments composed of alpha- and beta-tubulin heterodimers. Microtubules grow by the addition of GTP-tubulin dimers to the microtubule end, where a stabilizing cap forms. Below the cap, tubulin dimers are in GDP-bound state, owing to GTPase activity of alpha-tubulin. The protein is Tubulin alpha-8 chain (TUBA8) of Bos taurus (Bovine).